A 141-amino-acid polypeptide reads, in one-letter code: ATP synthase F(0) complex subunit C2, mitochondrial (141 aa).

The transit peptide at 1-66 (MFACSKFVST…RSFQTSAISR (66 aa)) directs the protein to the mitochondrion. A helical membrane pass occupies residues 82-102 (VGVAGSGAGIGTVFGSLIIGY). An N6,N6,N6-trimethyllysine modification is found at Lys-109. The chain crosses the membrane as a helical span at residues 117-137 (ILGFALSEAMGLFCLMVAFLI).

Belongs to the ATPase C chain family. In terms of assembly, F-type ATPases have 2 components, CF(1) - the catalytic core - and CF(0) - the membrane proton channel. CF(1) has five subunits: alpha(3), beta(3), gamma(1), delta(1), epsilon(1). CF(0) has three main subunits: a, b and c. Interacts with DNAJC30; interaction is direct. In terms of processing, trimethylated by ATPSCKMT at Lys-109. Methylation is required for proper incorporation of the C subunit into the ATP synthase complex and mitochondrial respiration.

It is found in the mitochondrion membrane. In terms of biological role, mitochondrial membrane ATP synthase (F(1)F(0) ATP synthase or Complex V) produces ATP from ADP in the presence of a proton gradient across the membrane which is generated by electron transport complexes of the respiratory chain. F-type ATPases consist of two structural domains, F(1) - containing the extramembraneous catalytic core and F(0) - containing the membrane proton channel, linked together by a central stalk and a peripheral stalk. During catalysis, ATP synthesis in the catalytic domain of F(1) is coupled via a rotary mechanism of the central stalk subunits to proton translocation. Part of the complex F(0) domain. A homomeric c-ring of probably 10 subunits is part of the complex rotary element. In Homo sapiens (Human), this protein is ATP synthase F(0) complex subunit C2, mitochondrial.